A 52-amino-acid polypeptide reads, in one-letter code: Proteinase inhibitor (52 aa).

Pyrrolidone carboxylic acid is present on glutamine 1. 4 disulfides stabilise this stretch: cysteine 3–cysteine 40, cysteine 6–cysteine 24, cysteine 7–cysteine 36, and cysteine 13–cysteine 49.

This sequence belongs to the protease inhibitor I20 (potato type II proteinase inhibitor) family.

Its subcellular location is the secreted. The protein is Proteinase inhibitor of Solanum melongena (Eggplant).